The following is a 299-amino-acid chain: UTP--glucose-1-phosphate uridylyltransferase 1 (299 aa).

The protein belongs to the UDPGP type 2 family.

The catalysed reaction is alpha-D-glucose 1-phosphate + UTP + H(+) = UDP-alpha-D-glucose + diphosphate. Its pathway is carbohydrate metabolism; nucleotide-sugar metabolism. The sequence is that of UTP--glucose-1-phosphate uridylyltransferase 1 (hasC1) from Streptococcus pyogenes serotype M6 (strain ATCC BAA-946 / MGAS10394).